Reading from the N-terminus, the 552-residue chain is Scaffold protein (552 aa).

Belongs to the poxviridae protein D13 family. Homotrimer. Self-assembles to form a layer. Interacts with A17 (via N-terminus); this interaction is necessary for D13 association with membranes.

Its subcellular location is the membrane. Functionally, scaffold protein which forms a transitory spherical honeycomb lattice providing curvature and rigidity to the convex membrane of crescent and immature virions (IV). This association occurs concomitantly with viral membrane formation. Targeted by the drug rifampicin, which prevents the formation of this lattice, and hence virus morphogenesis. In the presence of rifampicin, irregularly shaped membranes that lack the honeycomb layer accumulate around areas of electron-dense viroplasm. This layer is lost from virions during maturation from IV to mature virion (MV), through the proteolysis of A17 N-terminus. The sequence is that of Scaffold protein from Vertebrata (FPV).